Here is a 598-residue protein sequence, read N- to C-terminus: Aspartate--tRNA(Asp/Asn) ligase (598 aa).

Residue Glu-172 participates in L-aspartate binding. The aspartate stretch occupies residues 196–199 (QLFK). Arg-218 provides a ligand contact to L-aspartate. Residues 218 to 220 (RDE) and Gln-227 each bind ATP. His-455 provides a ligand contact to L-aspartate. Position 489 (Glu-489) interacts with ATP. Arg-496 contributes to the L-aspartate binding site. Residue 541–544 (GLDR) participates in ATP binding.

Belongs to the class-II aminoacyl-tRNA synthetase family. Type 1 subfamily. In terms of assembly, homodimer.

Its subcellular location is the cytoplasm. The enzyme catalyses tRNA(Asx) + L-aspartate + ATP = L-aspartyl-tRNA(Asx) + AMP + diphosphate. Aspartyl-tRNA synthetase with relaxed tRNA specificity since it is able to aspartylate not only its cognate tRNA(Asp) but also tRNA(Asn). Reaction proceeds in two steps: L-aspartate is first activated by ATP to form Asp-AMP and then transferred to the acceptor end of tRNA(Asp/Asn). The polypeptide is Aspartate--tRNA(Asp/Asn) ligase (Burkholderia mallei (strain ATCC 23344)).